Consider the following 219-residue polypeptide: Uracil-DNA glycosylase (219 aa).

The active-site Proton acceptor is the D62.

Belongs to the uracil-DNA glycosylase (UDG) superfamily. UNG family.

Its subcellular location is the cytoplasm. The catalysed reaction is Hydrolyzes single-stranded DNA or mismatched double-stranded DNA and polynucleotides, releasing free uracil.. Excises uracil residues from the DNA which can arise as a result of misincorporation of dUMP residues by DNA polymerase or due to deamination of cytosine. This is Uracil-DNA glycosylase from Lactococcus lactis subsp. cremoris (strain MG1363).